The chain runs to 1226 residues: Chromosome partition protein Smc (1226 aa).

An ATP-binding site is contributed by 32-39; that stretch reads PNGCGKSN. Coiled coils occupy residues 173–231 and 269–491; these read ITKF…IKRN and NSLE…SKSL. Residues 527 to 635 enclose the SMC hinge domain; it reads YQLLGNLIQC…FDGYFIASKF (109 aa). Coiled coils occupy residues 679-741, 775-965, and 1006-1078; these read QGVV…AAKK, MLES…LREA, and HRRY…KSKE.

It belongs to the SMC family. In terms of assembly, homodimer.

The protein resides in the cytoplasm. In terms of biological role, required for chromosome condensation and partitioning. The protein is Chromosome partition protein Smc of Halobacteriovorax marinus (strain ATCC BAA-682 / DSM 15412 / SJ) (Bacteriovorax marinus).